The sequence spans 264 residues: Thymidylate synthase (264 aa).

A dUMP-binding site is contributed by Arg-21. His-51 is a (6R)-5,10-methylene-5,6,7,8-tetrahydrofolate binding site. 126-127 (RR) contacts dUMP. The active-site Nucleophile is Cys-146. Residues 166 to 169 (RSAD), Asn-177, and 207 to 209 (HLY) contribute to the dUMP site. Residue Asp-169 coordinates (6R)-5,10-methylene-5,6,7,8-tetrahydrofolate. Ala-263 provides a ligand contact to (6R)-5,10-methylene-5,6,7,8-tetrahydrofolate.

The protein belongs to the thymidylate synthase family. Bacterial-type ThyA subfamily. In terms of assembly, homodimer.

It is found in the cytoplasm. The enzyme catalyses dUMP + (6R)-5,10-methylene-5,6,7,8-tetrahydrofolate = 7,8-dihydrofolate + dTMP. Its pathway is pyrimidine metabolism; dTTP biosynthesis. Its function is as follows. Catalyzes the reductive methylation of 2'-deoxyuridine-5'-monophosphate (dUMP) to 2'-deoxythymidine-5'-monophosphate (dTMP) while utilizing 5,10-methylenetetrahydrofolate (mTHF) as the methyl donor and reductant in the reaction, yielding dihydrofolate (DHF) as a by-product. This enzymatic reaction provides an intracellular de novo source of dTMP, an essential precursor for DNA biosynthesis. The chain is Thymidylate synthase from Azoarcus sp. (strain BH72).